Consider the following 402-residue polypeptide: Probable sugar efflux transporter (402 aa).

12 helical membrane-spanning segments follow: residues 15–35 (VLIMACAGFIFNTTEFVPVAM), 51–71 (GLMMTVYAWTVLIMSLPAMLA), 84–104 (LFIIFIVGHILLVIAWNFWIL), 109–129 (MCIALAHSVFWSITASLVMRI), 137–157 (QALGMLAIGTALATILGLPIG), 168–188 (VTFGIIAVLALSIMFLIIRLL), 209–229 (PLLLWLYVTTAIVISAHFTAY), 245–265 (NFATAVLLVFGFSGIAASLLF), 276–296 (FIVVSMSLLMFSLLLLLFSTE), 297–317 (AIIAMFSLVFIWGIGISCIGL), 333–353 (VATAIYSGIFNAGIGAGALFG), and 365–385 (IGYTGAALGLIGFIIFITTHL).

This sequence belongs to the major facilitator superfamily. SotB (TC 2.A.1.2) family.

It localises to the cell inner membrane. In terms of biological role, involved in the efflux of sugars. The physiological role may be the reduction of the intracellular concentration of toxic sugars or sugar metabolites. In Haemophilus influenzae (strain 86-028NP), this protein is Probable sugar efflux transporter.